A 322-amino-acid polypeptide reads, in one-letter code: Quinolinate synthase (322 aa).

Positions 38 and 55 each coordinate iminosuccinate. Residue cysteine 100 participates in [4Fe-4S] cluster binding. Residues 126–128 (YIN) and serine 143 each bind iminosuccinate. Cysteine 186 serves as a coordination point for [4Fe-4S] cluster. Iminosuccinate contacts are provided by residues 212-214 (HPE) and threonine 229. A [4Fe-4S] cluster-binding site is contributed by cysteine 279.

Belongs to the quinolinate synthase family. Type 2 subfamily. It depends on [4Fe-4S] cluster as a cofactor.

The protein resides in the cytoplasm. The enzyme catalyses iminosuccinate + dihydroxyacetone phosphate = quinolinate + phosphate + 2 H2O + H(+). The protein operates within cofactor biosynthesis; NAD(+) biosynthesis; quinolinate from iminoaspartate: step 1/1. Its function is as follows. Catalyzes the condensation of iminoaspartate with dihydroxyacetone phosphate to form quinolinate. The chain is Quinolinate synthase from Cyanothece sp. (strain PCC 7425 / ATCC 29141).